Here is a 656-residue protein sequence, read N- to C-terminus: Putative L-type lectin-domain containing receptor kinase V.2 (656 aa).

The first 23 residues, 1–23 (MSLLLKMLLFSLFFFYMASISQC), serve as a signal peptide directing secretion. At 24 to 276 (SDPTGGQFSF…EDQERSLSSK (253 aa)) the chain is on the extracellular side. Positions 29 to 248 (GQFSFNGYLY…SHYILGWSFN (220 aa)) are legume-lectin like. 5 N-linked (GlcNAc...) asparagine glycosylation sites follow: N78, N124, N159, N190, and N257. The chain crosses the membrane as a helical span at residues 277 to 297 (ILAISLSISGVTLVIVLILGV). The Cytoplasmic portion of the chain corresponds to 298-656 (MLFLKRKKFL…MTESFLSSGR (359 aa)). The Protein kinase domain occupies 334-615 (FKNSEVLGKG…GVATLPHNLL (282 aa)). Residues 340–348 (LGKGGFGKV) and K363 contribute to the ATP site. D459 (proton acceptor) is an active-site residue.

This sequence in the C-terminal section; belongs to the protein kinase superfamily. Ser/Thr protein kinase family. The protein in the N-terminal section; belongs to the leguminous lectin family.

The protein resides in the cell membrane. It carries out the reaction L-seryl-[protein] + ATP = O-phospho-L-seryl-[protein] + ADP + H(+). The enzyme catalyses L-threonyl-[protein] + ATP = O-phospho-L-threonyl-[protein] + ADP + H(+). This Arabidopsis thaliana (Mouse-ear cress) protein is Putative L-type lectin-domain containing receptor kinase V.2 (LECRK52).